The chain runs to 38 residues: Photosystem II reaction center protein M (38 aa).

A helical transmembrane segment spans residues 5–25 (ILGLIATALFIVIPTSFLLIL).

Belongs to the PsbM family. As to quaternary structure, PSII is composed of 1 copy each of membrane proteins PsbA, PsbB, PsbC, PsbD, PsbE, PsbF, PsbH, PsbI, PsbJ, PsbK, PsbL, PsbM, PsbT, PsbX, PsbY, PsbZ, Psb30/Ycf12, at least 3 peripheral proteins of the oxygen-evolving complex and a large number of cofactors. It forms dimeric complexes.

It localises to the plastid. The protein localises to the cyanelle thylakoid membrane. One of the components of the core complex of photosystem II (PSII). PSII is a light-driven water:plastoquinone oxidoreductase that uses light energy to abstract electrons from H(2)O, generating O(2) and a proton gradient subsequently used for ATP formation. It consists of a core antenna complex that captures photons, and an electron transfer chain that converts photonic excitation into a charge separation. This subunit is found at the monomer-monomer interface. This Cyanophora paradoxa protein is Photosystem II reaction center protein M.